A 446-amino-acid chain; its full sequence is MTEQKRKLEKLTGVKGMNDILPQDAGLWEFFEATVKSLLRAYGYQNIRTPIVEHTPLFTRGIGEVTDIVEKEMYSFVDALNGENLTLRPENTAAVVRAAIEHNMLYDGPKRLWYIGPMFRHERPQRGRYRQFHQVGVEALGFAGPDADAEIVMMCQRLWEDLGLTGIKLEINSLGLAEERAAHRVELIKYLEQHADKLDDDAQRRLYTNPLRVLDTKNPALQEIVRNAPKLIDFLGDVSRAHFEGLQRLLKANNVPFTINPRLVRGLDYYNLTVFEWVTDKLGAQGTVAAGGRYDPLIEQLGGKPTAACGWAMGIERILELLKEEHLVPEQEGVDVYVVHQGDAAREQAFIVAERLRDTGLDVILHCSADGAGASFKSQMKRADASGAAFAVIFGEDEVTNGTASVKPLRGTGDDGEKSVQQSVPVESLTEFLINAMVATAEDGDD.

Residues 403 to 422 (TASVKPLRGTGDDGEKSVQQ) form a disordered region.

The protein belongs to the class-II aminoacyl-tRNA synthetase family. In terms of assembly, homodimer.

It is found in the cytoplasm. It carries out the reaction tRNA(His) + L-histidine + ATP = L-histidyl-tRNA(His) + AMP + diphosphate + H(+). The protein is Histidine--tRNA ligase of Burkholderia thailandensis (strain ATCC 700388 / DSM 13276 / CCUG 48851 / CIP 106301 / E264).